Reading from the N-terminus, the 390-residue chain is L-serine phosphate decarboxylase Cj1436c (390 aa).

N6-(pyridoxal phosphate)lysine is present on Lys-243.

This sequence belongs to the class-I pyridoxal-phosphate-dependent aminotransferase family. The cofactor is pyridoxal 5'-phosphate.

It carries out the reaction O-phospho-L-serine + H(+) = phosphoethanolamine + CO2. Its pathway is capsule biogenesis; capsule polysaccharide biosynthesis. Functionally, pyridoxal phosphate (PLP)-dependent decarboxylase involved in the biosynthesis of amidated D-glucuronic acid structures found on the capsular polysaccharide (CPS) of C.jejuni. Catalyzes the decarboxylation of L-serine phosphate to ethanolamine phosphate. Less active with L-threonine phosphate. No activity with L-serine, L-threonine, L-aspartate or L-glutamate. This chain is L-serine phosphate decarboxylase Cj1436c, found in Campylobacter jejuni subsp. jejuni serotype O:2 (strain ATCC 700819 / NCTC 11168).